Consider the following 229-residue polypeptide: Cytochrome c oxidase subunit 2 (229 aa).

Residues 1–14 lie on the Mitochondrial intermembrane side of the membrane; the sequence is MPTPNQTNFQDAAS. Residues 15-45 form a helical membrane-spanning segment; that stretch reads PLMEELTHFHDHTLMIVFMISLLVLYILLSM. The Mitochondrial matrix segment spans residues 46-59; it reads LSTKLTHTNTANAQ. The chain crosses the membrane as a helical span at residues 60–87; sequence QAEMVWTILPAIILITIALPSLQILYMM. At 88–229 the chain is on the mitochondrial intermembrane side; the sequence is DEINKPHMTI…DLWLAMIDTL (142 aa). Residues His161, Cys196, Glu198, Cys200, His204, and Met207 each coordinate Cu cation. Glu198 contacts Mg(2+).

It belongs to the cytochrome c oxidase subunit 2 family. In terms of assembly, component of the cytochrome c oxidase (complex IV, CIV), a multisubunit enzyme composed of 14 subunits. The complex is composed of a catalytic core of 3 subunits MT-CO1, MT-CO2 and MT-CO3, encoded in the mitochondrial DNA, and 11 supernumerary subunits COX4I, COX5A, COX5B, COX6A, COX6B, COX6C, COX7A, COX7B, COX7C, COX8 and NDUFA4, which are encoded in the nuclear genome. The complex exists as a monomer or a dimer and forms supercomplexes (SCs) in the inner mitochondrial membrane with NADH-ubiquinone oxidoreductase (complex I, CI) and ubiquinol-cytochrome c oxidoreductase (cytochrome b-c1 complex, complex III, CIII), resulting in different assemblies (supercomplex SCI(1)III(2)IV(1) and megacomplex MCI(2)III(2)IV(2)). Found in a complex with TMEM177, COA6, COX18, COX20, SCO1 and SCO2. Interacts with TMEM177 in a COX20-dependent manner. Interacts with COX20. Interacts with COX16. It depends on Cu cation as a cofactor.

It localises to the mitochondrion inner membrane. The catalysed reaction is 4 Fe(II)-[cytochrome c] + O2 + 8 H(+)(in) = 4 Fe(III)-[cytochrome c] + 2 H2O + 4 H(+)(out). Its function is as follows. Component of the cytochrome c oxidase, the last enzyme in the mitochondrial electron transport chain which drives oxidative phosphorylation. The respiratory chain contains 3 multisubunit complexes succinate dehydrogenase (complex II, CII), ubiquinol-cytochrome c oxidoreductase (cytochrome b-c1 complex, complex III, CIII) and cytochrome c oxidase (complex IV, CIV), that cooperate to transfer electrons derived from NADH and succinate to molecular oxygen, creating an electrochemical gradient over the inner membrane that drives transmembrane transport and the ATP synthase. Cytochrome c oxidase is the component of the respiratory chain that catalyzes the reduction of oxygen to water. Electrons originating from reduced cytochrome c in the intermembrane space (IMS) are transferred via the dinuclear copper A center (CU(A)) of subunit 2 and heme A of subunit 1 to the active site in subunit 1, a binuclear center (BNC) formed by heme A3 and copper B (CU(B)). The BNC reduces molecular oxygen to 2 water molecules using 4 electrons from cytochrome c in the IMS and 4 protons from the mitochondrial matrix. This chain is Cytochrome c oxidase subunit 2 (MT-CO2), found in Pelomedusa subrufa (African side-necked turtle).